Reading from the N-terminus, the 141-residue chain is Large ribosomal subunit protein uL11c (141 aa).

It belongs to the universal ribosomal protein uL11 family. In terms of assembly, part of the ribosomal stalk of the 50S ribosomal subunit. Interacts with L10 and the large rRNA to form the base of the stalk. L10 forms an elongated spine to which L12 dimers bind in a sequential fashion forming a multimeric L10(L12)X complex.

Its subcellular location is the plastid. It localises to the chloroplast. In terms of biological role, forms part of the ribosomal stalk which helps the ribosome interact with GTP-bound translation factors. The protein is Large ribosomal subunit protein uL11c of Thalassiosira pseudonana (Marine diatom).